A 195-amino-acid polypeptide reads, in one-letter code: Imidazoleglycerol-phosphate dehydratase (195 aa).

The protein belongs to the imidazoleglycerol-phosphate dehydratase family.

It is found in the cytoplasm. The catalysed reaction is D-erythro-1-(imidazol-4-yl)glycerol 3-phosphate = 3-(imidazol-4-yl)-2-oxopropyl phosphate + H2O. It functions in the pathway amino-acid biosynthesis; L-histidine biosynthesis; L-histidine from 5-phospho-alpha-D-ribose 1-diphosphate: step 6/9. The sequence is that of Imidazoleglycerol-phosphate dehydratase from Burkholderia cenocepacia (strain ATCC BAA-245 / DSM 16553 / LMG 16656 / NCTC 13227 / J2315 / CF5610) (Burkholderia cepacia (strain J2315)).